Here is a 219-residue protein sequence, read N- to C-terminus: Ribose-5-phosphate isomerase A (219 aa).

Substrate is bound by residues 28 to 31, 81 to 84, and 94 to 97; these read TGST, DGAD, and KGGG. Glutamate 103 (proton acceptor) is an active-site residue. Substrate is bound at residue lysine 121.

The protein belongs to the ribose 5-phosphate isomerase family. Homodimer.

The enzyme catalyses aldehydo-D-ribose 5-phosphate = D-ribulose 5-phosphate. It functions in the pathway carbohydrate degradation; pentose phosphate pathway; D-ribose 5-phosphate from D-ribulose 5-phosphate (non-oxidative stage): step 1/1. In terms of biological role, catalyzes the reversible conversion of ribose-5-phosphate to ribulose 5-phosphate. This is Ribose-5-phosphate isomerase A from Shewanella sp. (strain ANA-3).